Reading from the N-terminus, the 210-residue chain is Uracil phosphoribosyltransferase (210 aa).

5-phospho-alpha-D-ribose 1-diphosphate-binding positions include arginine 77, arginine 102, and 129–137 (DPMLATGAS). Uracil-binding positions include isoleucine 195 and 200 to 202 (GDA). 5-phospho-alpha-D-ribose 1-diphosphate is bound at residue aspartate 201.

It belongs to the UPRTase family. It depends on Mg(2+) as a cofactor.

The enzyme catalyses UMP + diphosphate = 5-phospho-alpha-D-ribose 1-diphosphate + uracil. It participates in pyrimidine metabolism; UMP biosynthesis via salvage pathway; UMP from uracil: step 1/1. Its activity is regulated as follows. Allosterically activated by GTP. Functionally, catalyzes the conversion of uracil and 5-phospho-alpha-D-ribose 1-diphosphate (PRPP) to UMP and diphosphate. The polypeptide is Uracil phosphoribosyltransferase (Mycoplasmoides gallisepticum (strain R(low / passage 15 / clone 2)) (Mycoplasma gallisepticum)).